The chain runs to 124 residues: Large ribosomal subunit protein bL12 (124 aa).

It belongs to the bacterial ribosomal protein bL12 family. Homodimer. Part of the ribosomal stalk of the 50S ribosomal subunit. Forms a multimeric L10(L12)X complex, where L10 forms an elongated spine to which 2 to 4 L12 dimers bind in a sequential fashion. Binds GTP-bound translation factors.

Functionally, forms part of the ribosomal stalk which helps the ribosome interact with GTP-bound translation factors. Is thus essential for accurate translation. The protein is Large ribosomal subunit protein bL12 of Burkholderia ambifaria (strain MC40-6).